Here is a 158-residue protein sequence, read N- to C-terminus: Putative ribosomal RNA large subunit methyltransferase H (158 aa).

Residues Leu76, Gly107, and 126–131 (LSRMTF) each bind S-adenosyl-L-methionine.

It belongs to the RNA methyltransferase RlmH family.

Its subcellular location is the cytoplasm. It catalyses the reaction pseudouridine(1915) in 23S rRNA + S-adenosyl-L-methionine = N(3)-methylpseudouridine(1915) in 23S rRNA + S-adenosyl-L-homocysteine + H(+). Functionally, specifically methylates the pseudouridine at position 1915 (m3Psi1915) in 23S rRNA. The chain is Putative ribosomal RNA large subunit methyltransferase H from Methanocorpusculum labreanum (strain ATCC 43576 / DSM 4855 / Z).